Consider the following 1595-residue polypeptide: Pentafunctional AROM polypeptide (1595 aa).

The 3-dehydroquinate synthase stretch occupies residues 1-384 (MGVPTKISIL…HEPRASTVSN (384 aa)). Residues 44 to 46 (DTN), 81 to 84 (ESSK), 114 to 116 (GGV), and D119 contribute to the NAD(+) site. R130 contributes to the 7-phospho-2-dehydro-3-deoxy-D-arabino-heptonate binding site. Residue 139-140 (TT) coordinates NAD(+). 7-phospho-2-dehydro-3-deoxy-D-arabino-heptonate-binding residues include D146 and K152. K161 is an NAD(+) binding site. Residue N162 coordinates 7-phospho-2-dehydro-3-deoxy-D-arabino-heptonate. Residues 179-182 (FLNT) and N190 each bind NAD(+). E194 lines the Zn(2+) pocket. 7-phospho-2-dehydro-3-deoxy-D-arabino-heptonate is bound by residues 194-197 (EVIK) and K250. Residue E260 is the Proton acceptor; for 3-dehydroquinate synthase activity of the active site. 7-phospho-2-dehydro-3-deoxy-D-arabino-heptonate contacts are provided by residues 264–268 (RNLLN) and H271. Residue H271 participates in Zn(2+) binding. H275 functions as the Proton acceptor; for 3-dehydroquinate synthase activity in the catalytic mechanism. H287 and K356 together coordinate 7-phospho-2-dehydro-3-deoxy-D-arabino-heptonate. Zn(2+) is bound at residue H287. An EPSP synthase region spans residues 397-842 (VSPGVPKGLD…WDSLAQTFKV (446 aa)). C824 functions as the For EPSP synthase activity in the catalytic mechanism. The interval 866–1057 (ASIFIIGMRG…RRKENTFFVS (192 aa)) is shikimate kinase. 872–879 (GMRGAGKT) lines the ATP pocket. The interval 1058–1278 (LTLPDLSLAA…AAPGQLSARE (221 aa)) is 3-dehydroquinase. H1181 serves as the catalytic Proton acceptor; for 3-dehydroquinate dehydratase activity. K1209 functions as the Schiff-base intermediate with substrate; for 3-dehydroquinate dehydratase activity in the catalytic mechanism. The segment at 1291–1595 (AKKFAVIGNP…MGVSPSEDIL (305 aa)) is shikimate dehydrogenase.

The protein in the N-terminal section; belongs to the sugar phosphate cyclases superfamily. Dehydroquinate synthase family. It in the 2nd section; belongs to the EPSP synthase family. This sequence in the 3rd section; belongs to the shikimate kinase family. In the 4th section; belongs to the type-I 3-dehydroquinase family. The protein in the C-terminal section; belongs to the shikimate dehydrogenase family. In terms of assembly, homodimer. Zn(2+) serves as cofactor.

It localises to the cytoplasm. The enzyme catalyses 7-phospho-2-dehydro-3-deoxy-D-arabino-heptonate = 3-dehydroquinate + phosphate. It catalyses the reaction 3-dehydroquinate = 3-dehydroshikimate + H2O. It carries out the reaction shikimate + NADP(+) = 3-dehydroshikimate + NADPH + H(+). The catalysed reaction is shikimate + ATP = 3-phosphoshikimate + ADP + H(+). The enzyme catalyses 3-phosphoshikimate + phosphoenolpyruvate = 5-O-(1-carboxyvinyl)-3-phosphoshikimate + phosphate. It functions in the pathway metabolic intermediate biosynthesis; chorismate biosynthesis; chorismate from D-erythrose 4-phosphate and phosphoenolpyruvate: step 2/7. The protein operates within metabolic intermediate biosynthesis; chorismate biosynthesis; chorismate from D-erythrose 4-phosphate and phosphoenolpyruvate: step 3/7. It participates in metabolic intermediate biosynthesis; chorismate biosynthesis; chorismate from D-erythrose 4-phosphate and phosphoenolpyruvate: step 4/7. Its pathway is metabolic intermediate biosynthesis; chorismate biosynthesis; chorismate from D-erythrose 4-phosphate and phosphoenolpyruvate: step 5/7. It functions in the pathway metabolic intermediate biosynthesis; chorismate biosynthesis; chorismate from D-erythrose 4-phosphate and phosphoenolpyruvate: step 6/7. Its function is as follows. The AROM polypeptide catalyzes 5 consecutive enzymatic reactions in prechorismate polyaromatic amino acid biosynthesis. The sequence is that of Pentafunctional AROM polypeptide from Ajellomyces capsulatus (strain G186AR / H82 / ATCC MYA-2454 / RMSCC 2432) (Darling's disease fungus).